The sequence spans 360 residues: Phospho-N-acetylmuramoyl-pentapeptide-transferase (360 aa).

Over Met-1–Arg-25 the chain is Periplasmic. A helical transmembrane segment spans residues Ala-26–Ala-46. Over His-47–Thr-71 the chain is Cytoplasmic. Residues Pro-72–Tyr-92 traverse the membrane as a helical segment. A topological domain (periplasmic) is located at residue Pro-93. The chain crosses the membrane as a helical span at residues Ser-94–Val-114. The Cytoplasmic segment spans residues Asp-115–Arg-131. A helical membrane pass occupies residues Trp-132 to Gly-152. Topologically, residues Lys-153 to Asp-167 are periplasmic. A helical membrane pass occupies residues Val-168–Gly-188. Topologically, residues Asn-189–Asp-198 are cytoplasmic. Residues Gly-199–Thr-219 form a helical membrane-spanning segment. The Periplasmic portion of the chain corresponds to Gly-220–His-235. The chain crosses the membrane as a helical span at residues Ala-236–Phe-256. Topologically, residues Asn-257 to Gln-262 are cytoplasmic. The helical transmembrane segment at Val-263–Leu-283 threads the bilayer. Residues Leu-284–Glu-287 lie on the Periplasmic side of the membrane. A helical transmembrane segment spans residues Phe-288–Val-308. Residues Gly-309–Arg-337 are Cytoplasmic-facing. A helical membrane pass occupies residues Val-338–Lys-358. The Periplasmic portion of the chain corresponds to Val-359–Arg-360.

It belongs to the glycosyltransferase 4 family. MraY subfamily. It depends on Mg(2+) as a cofactor.

The protein resides in the cell inner membrane. It carries out the reaction UDP-N-acetyl-alpha-D-muramoyl-L-alanyl-gamma-D-glutamyl-meso-2,6-diaminopimeloyl-D-alanyl-D-alanine + di-trans,octa-cis-undecaprenyl phosphate = di-trans,octa-cis-undecaprenyl diphospho-N-acetyl-alpha-D-muramoyl-L-alanyl-D-glutamyl-meso-2,6-diaminopimeloyl-D-alanyl-D-alanine + UMP. The protein operates within cell wall biogenesis; peptidoglycan biosynthesis. Catalyzes the initial step of the lipid cycle reactions in the biosynthesis of the cell wall peptidoglycan: transfers peptidoglycan precursor phospho-MurNAc-pentapeptide from UDP-MurNAc-pentapeptide onto the lipid carrier undecaprenyl phosphate, yielding undecaprenyl-pyrophosphoryl-MurNAc-pentapeptide, known as lipid I. In Escherichia coli O157:H7, this protein is Phospho-N-acetylmuramoyl-pentapeptide-transferase.